Consider the following 127-residue polypeptide: Glycine cleavage system H protein (127 aa).

Positions 24-105 constitute a Lipoyl-binding domain; the sequence is AALVGITDFA…YGEGWLVKIR (82 aa). Lys-65 carries the post-translational modification N6-lipoyllysine.

This sequence belongs to the GcvH family. In terms of assembly, the glycine cleavage system is composed of four proteins: P, T, L and H. Requires (R)-lipoate as cofactor.

The glycine cleavage system catalyzes the degradation of glycine. The H protein shuttles the methylamine group of glycine from the P protein to the T protein. The sequence is that of Glycine cleavage system H protein from Chlorobium limicola (strain DSM 245 / NBRC 103803 / 6330).